The primary structure comprises 185 residues: Prenylated Rab acceptor protein 1 (185 aa).

At 1-78 (MAAQKDQQKD…RNVEYYQSNY (78 aa)) the chain is on the cytoplasmic side. The required for interaction with prenylated RAB3A and VAMP2 stretch occupies residues 30 to 54 (AGREWLERRRATIRPWGSFVDQRRF). 2 helical membrane passes run 79–94 (VFVFLGLILYCVVTSP) and 95–112 (MLLVALAVFFGACYILYL). Residues 113–131 (RTLQSKFVLFGREVSPAHQ) lie on the Cytoplasmic side of the membrane. 2 helical membrane passes run 132-148 (YALAGGVSFPFFWLAGA) and 149-165 (GSAVFWVLGATLVVIGS). The required for interaction with GDI1 stretch occupies residues 165–185 (SHAAFHQIEAVDGEELQMEPV). Residues 166–185 (HAAFHQIEAVDGEELQMEPV) are Cytoplasmic-facing. The interval 175–185 (VDGEELQMEPV) is required for interaction with prenylated RAB3A and VAMP2. Residues 175–185 (VDGEELQMEPV) are homodimerization.

Belongs to the PRA1 family. In terms of assembly, homodimer. Interacts with VAMP2 (synaptobrevin-2), prenylated Rab proteins, GDI1, NRDG1 and PCLO.

Its subcellular location is the cell membrane. It is found in the cytoplasm. The protein localises to the golgi apparatus. It localises to the cytoplasmic vesicle. The protein resides in the secretory vesicle. Its subcellular location is the synaptic vesicle. In terms of biological role, general Rab protein regulator required for vesicle formation from the Golgi complex. May control vesicle docking and fusion by mediating the action of Rab GTPases to the SNARE complexes. In addition it inhibits the removal of Rab GTPases from the membrane by GDI1. In Sus scrofa (Pig), this protein is Prenylated Rab acceptor protein 1 (RABAC1).